A 278-amino-acid polypeptide reads, in one-letter code: Potassium/proton antiporter CemA (278 aa).

The next 4 helical transmembrane spans lie at 60–80 (YLVL…SLVF), 163–183 (ILAF…IAVL), 201–221 (FLII…GWEV), and 239–259 (IFLF…YWIF).

The protein belongs to the CemA family.

The protein resides in the plastid. It localises to the chloroplast inner membrane. The enzyme catalyses K(+)(in) + H(+)(out) = K(+)(out) + H(+)(in). In terms of biological role, contributes to K(+)/H(+) antiport activity by supporting proton efflux to control proton extrusion and homeostasis in chloroplasts in a light-dependent manner to modulate photosynthesis. Prevents excessive induction of non-photochemical quenching (NPQ) under continuous-light conditions. Indirectly promotes efficient inorganic carbon uptake into chloroplasts. This chain is Potassium/proton antiporter CemA, found in Guillardia theta (Cryptophyte).